Consider the following 320-residue polypeptide: Cytochrome f (320 aa).

Residues 1-35 (MQNRKTFSWVKEQMTRSIYVSIMIYVITRASISNA) form the signal peptide. 4 residues coordinate heme: tyrosine 36, cysteine 56, cysteine 59, and histidine 60. The helical transmembrane segment at 286–306 (VQGLLFFLASVILAQIFLVLK) threads the bilayer.

This sequence belongs to the cytochrome f family. The 4 large subunits of the cytochrome b6-f complex are cytochrome b6, subunit IV (17 kDa polypeptide, petD), cytochrome f and the Rieske protein, while the 4 small subunits are PetG, PetL, PetM and PetN. The complex functions as a dimer. Heme is required as a cofactor.

It is found in the plastid. The protein localises to the chloroplast thylakoid membrane. In terms of biological role, component of the cytochrome b6-f complex, which mediates electron transfer between photosystem II (PSII) and photosystem I (PSI), cyclic electron flow around PSI, and state transitions. This chain is Cytochrome f, found in Phalaenopsis aphrodite subsp. formosana (Moth orchid).